The following is a 55-amino-acid chain: ATP synthase F(0) complex subunit 8 (55 aa).

The chain crosses the membrane as a helical span at residues 7-24 (NPWFFIMLLSWLTFSLII). Residues 35–55 (NPPSNKTTTHTKTTPWTWPWT) form a disordered region. Over residues 37–55 (PSNKTTTHTKTTPWTWPWT) the composition is skewed to low complexity.

This sequence belongs to the ATPase protein 8 family. Component of the ATP synthase complex composed at least of ATP5F1A/subunit alpha, ATP5F1B/subunit beta, ATP5MC1/subunit c (homooctomer), MT-ATP6/subunit a, MT-ATP8/subunit 8, ATP5ME/subunit e, ATP5MF/subunit f, ATP5MG/subunit g, ATP5MK/subunit k, ATP5MJ/subunit j, ATP5F1C/subunit gamma, ATP5F1D/subunit delta, ATP5F1E/subunit epsilon, ATP5PF/subunit F6, ATP5PB/subunit b, ATP5PD/subunit d, ATP5PO/subunit OSCP. ATP synthase complex consists of a soluble F(1) head domain (subunits alpha(3) and beta(3)) - the catalytic core - and a membrane F(0) domain - the membrane proton channel (subunits c, a, 8, e, f, g, k and j). These two domains are linked by a central stalk (subunits gamma, delta, and epsilon) rotating inside the F1 region and a stationary peripheral stalk (subunits F6, b, d, and OSCP).

It localises to the mitochondrion membrane. Subunit 8, of the mitochondrial membrane ATP synthase complex (F(1)F(0) ATP synthase or Complex V) that produces ATP from ADP in the presence of a proton gradient across the membrane which is generated by electron transport complexes of the respiratory chain. ATP synthase complex consist of a soluble F(1) head domain - the catalytic core - and a membrane F(1) domain - the membrane proton channel. These two domains are linked by a central stalk rotating inside the F(1) region and a stationary peripheral stalk. During catalysis, ATP synthesis in the catalytic domain of F(1) is coupled via a rotary mechanism of the central stalk subunits to proton translocation. In vivo, can only synthesize ATP although its ATP hydrolase activity can be activated artificially in vitro. Part of the complex F(0) domain. The protein is ATP synthase F(0) complex subunit 8 of Chaetura pelagica (Chimney swift).